The following is a 61-amino-acid chain: Small ribosomal subunit protein uS14 (61 aa).

Zn(2+)-binding residues include cysteine 24, cysteine 27, cysteine 40, and cysteine 43.

The protein belongs to the universal ribosomal protein uS14 family. Zinc-binding uS14 subfamily. As to quaternary structure, part of the 30S ribosomal subunit. Contacts proteins S3 and S10. It depends on Zn(2+) as a cofactor.

Its function is as follows. Binds 16S rRNA, required for the assembly of 30S particles and may also be responsible for determining the conformation of the 16S rRNA at the A site. This chain is Small ribosomal subunit protein uS14, found in Mesoplasma florum (strain ATCC 33453 / NBRC 100688 / NCTC 11704 / L1) (Acholeplasma florum).